Here is a 415-residue protein sequence, read N- to C-terminus: Histidine--tRNA ligase (415 aa).

It belongs to the class-II aminoacyl-tRNA synthetase family. Homodimer.

Its subcellular location is the cytoplasm. The enzyme catalyses tRNA(His) + L-histidine + ATP = L-histidyl-tRNA(His) + AMP + diphosphate + H(+). The protein is Histidine--tRNA ligase of Clostridium perfringens (strain SM101 / Type A).